Reading from the N-terminus, the 1662-residue chain is ABC transporter A family member 5 (1662 aa).

Helical transmembrane passes span 30-50 (IVFP…VQLF), 242-262 (SVFV…ELVV), 284-304 (ISWI…IIVI), 317-337 (IIVI…AFIF), 346-366 (FAGL…IFIG), 377-397 (LLLC…IMSI), and 417-437 (QIIG…WYLD). Residues 505-739 (ISIRNLRKEF…YGVGYLLTCS (235 aa)) enclose the ABC transporter 1 domain. 541–548 (GPNGSGKS) contacts ATP. The next 7 membrane-spanning stretches (helical) occupy residues 872–892 (FKAF…SIIV), 1052–1072 (IVYF…SFAG), 1102–1122 (LWDY…LAIV), 1130–1150 (FGLF…LSYL), 1163–1183 (GAIT…MIIL), 1201–1221 (IIDI…VIFI), and 1246–1266 (STPI…ILLI). Residues 1322 to 1557 (LQYKGLHKLF…FGAGYSVEVK (236 aa)) form the ABC transporter 2 domain. ATP is bound at residue 1360–1367 (GLNGAGKT).

Belongs to the ABC transporter superfamily. ABCA family.

The protein resides in the membrane. This is ABC transporter A family member 5 (abcA5) from Dictyostelium discoideum (Social amoeba).